Here is a 320-residue protein sequence, read N- to C-terminus: Malate dehydrogenase (320 aa).

NAD(+) contacts are provided by residues 10 to 15 and D34; that span reads GSGMIG. 2 residues coordinate substrate: R83 and R89. NAD(+) is bound by residues N96 and 119–121; that span reads ITN. Residues N121 and R152 each coordinate substrate. H176 functions as the Proton acceptor in the catalytic mechanism.

The protein belongs to the LDH/MDH superfamily. MDH type 3 family.

It catalyses the reaction (S)-malate + NAD(+) = oxaloacetate + NADH + H(+). In terms of biological role, catalyzes the reversible oxidation of malate to oxaloacetate. The protein is Malate dehydrogenase of Rhizobium rhizogenes (strain K84 / ATCC BAA-868) (Agrobacterium radiobacter).